The following is a 334-amino-acid chain: Isocitrate/homoisocitrate dehydrogenase (334 aa).

Position 70–72 (70–72 (ATS)) interacts with NADH. (2R,3S)-homoisocitrate-binding residues include serine 72, arginine 85, arginine 88, arginine 98, arginine 118, tyrosine 125, lysine 171, and asparagine 173. Asparagine 173 contributes to the NADH binding site. Residues aspartate 204, aspartate 228, and aspartate 232 each contribute to the Mg(2+) site. NADH contacts are provided by residues 261–265 (GSAPD) and asparagine 273.

The protein belongs to the isocitrate and isopropylmalate dehydrogenases family. In terms of assembly, homotetramer. Dimer of dimers. The homotetramer can transiently dissociate into homodimers. It depends on Mg(2+) as a cofactor.

It carries out the reaction (2R,3S)-homoisocitrate + NAD(+) = 2-oxoadipate + CO2 + NADH. The catalysed reaction is D-threo-isocitrate + NAD(+) = 2-oxoglutarate + CO2 + NADH. Its pathway is amino-acid biosynthesis; L-lysine biosynthesis via AAA pathway; L-alpha-aminoadipate from 2-oxoglutarate: step 4/5. Catalyzes the NAD(+)-dependent oxidative decarboxylation of homoisocitrate to 2-oxoadipate (alpha-ketoadipate), a reaction involved in lysine biosynthesis through the alpha-aminoadipate pathway. In addition, has high activity with isocitrate, but is inactive with 3-isopropylmalate. In Thermus thermophilus (strain ATCC BAA-163 / DSM 7039 / HB27), this protein is Isocitrate/homoisocitrate dehydrogenase (hicd).